Consider the following 334-residue polypeptide: Phenylalanine--tRNA ligase alpha subunit (334 aa).

Residue E249 coordinates Mg(2+).

The protein belongs to the class-II aminoacyl-tRNA synthetase family. Phe-tRNA synthetase alpha subunit type 1 subfamily. Tetramer of two alpha and two beta subunits. Mg(2+) is required as a cofactor.

It is found in the cytoplasm. The enzyme catalyses tRNA(Phe) + L-phenylalanine + ATP = L-phenylalanyl-tRNA(Phe) + AMP + diphosphate + H(+). The sequence is that of Phenylalanine--tRNA ligase alpha subunit from Desulfosudis oleivorans (strain DSM 6200 / JCM 39069 / Hxd3) (Desulfococcus oleovorans).